A 389-amino-acid chain; its full sequence is Lipopolysaccharide assembly protein B (389 aa).

The helical transmembrane segment at 1 to 20 threads the bilayer; it reads MLELLFLLLPVAAAYGWYMG. The Cytoplasmic portion of the chain corresponds to 21 to 389; that stretch reads RRSAQQNKQD…IKPIRGLDGL (369 aa). 7 TPR repeats span residues 35 to 68, 69 to 102, 107 to 140, 142 to 174, 180 to 213, 214 to 247, and 249 to 282; these read LSRD…DTGT, VEAH…ASLT, LLAI…TDFR, GALQ…GKDK, AHFY…DKNS, ARVS…DREL, and SETL…NTGA. Fe cation is bound by residues Cys357, Cys360, Cys371, and Cys374.

Belongs to the LapB family.

It localises to the cell inner membrane. Functionally, modulates cellular lipopolysaccharide (LPS) levels by regulating LpxC, which is involved in lipid A biosynthesis. May act by modulating the proteolytic activity of FtsH towards LpxC. May also coordinate assembly of proteins involved in LPS synthesis at the plasma membrane. This Escherichia coli O157:H7 protein is Lipopolysaccharide assembly protein B.